We begin with the raw amino-acid sequence, 411 residues long: Corticotropin-releasing factor receptor 2 (411 aa).

Positions 1–19 form a signal peptide, not cleaved; sequence MDAALLLSLLEANCSLALA. Topologically, residues 1 to 108 are extracellular; that stretch reads MDAALLLSLL…EPILDDKQRK (108 aa). N-linked (GlcNAc...) asparagine glycosylation is found at Asn-13, Asn-41, Asn-74, Asn-86, and Asn-94. 3 cysteine pairs are disulfide-bonded: Cys-14–Cys-50, Cys-40–Cys-83, and Cys-64–Cys-98. The chain crosses the membrane as a helical span at residues 109–139; it reads YDLHYRIALIINYLGHCVSVVALVAAFLLFL. Residues 140 to 146 are Cytoplasmic-facing; sequence VLRSIRC. Residues 147–171 form a helical membrane-spanning segment; the sequence is LRNVIHWNLITTFILRNITWFLLQL. Over 172–185 the chain is Extracellular; sequence IDHEVHEGNEVWCR. An intrachain disulfide couples Cys-184 to Cys-254. Residues 186–214 form a helical membrane-spanning segment; sequence CVTTIFNYFVVTNFFWMFVEGCYLHTAIV. Over 215–221 the chain is Cytoplasmic; that stretch reads MTYSTEH. The chain crosses the membrane as a helical span at residues 222 to 249; sequence LRKWLFLFIGWCIPCPIIVAWAVGKLYY. Residues 250 to 265 are Extracellular-facing; it reads ENEQCWFGKEPGDLVD. Residues 266–291 form a helical membrane-spanning segment; that stretch reads YIYQGPIILVLLINFVFLFNIVRILM. Over 292-302 the chain is Cytoplasmic; it reads TKLRASTTSET. The helical transmembrane segment at 303 to 327 threads the bilayer; the sequence is IQYRKAVKATLVLLPLLGITYMLFF. At 328–334 the chain is on the extracellular side; it reads VNPGEDD. Residues 335-364 form a helical membrane-spanning segment; that stretch reads LSQIVFIYFNSFLQSFQGFFVSVFYCFFNG. Topologically, residues 365 to 411 are cytoplasmic; the sequence is EVRSALRKRWHRWQDHHALRVPVARAMSIPTSPTRISFHSIKQTAAV.

The protein belongs to the G-protein coupled receptor 2 family. In terms of assembly, monomer. Interacts (via N-terminal extracellular domain) with CRF, UCN, UCN2 and UCN3. Post-translationally, a N-glycosylation site within the signal peptide impedes its proper cleavage and function. Predominantly expressed in limbic regions of the brain such as the lateral septum, the entorhinal cortex, the hypothalamic ventromedial nucleus and several amygdaloid nuclei. Also detectable in lung, kidney and heart.

It localises to the cell membrane. Its function is as follows. G-protein coupled receptor for CRH (corticotropin-releasing factor), UCN (urocortin), UCN2 and UCN3. Has high affinity for UCN. Ligand binding causes a conformation change that triggers signaling via guanine nucleotide-binding proteins (G proteins) and down-stream effectors, such as adenylate cyclase. Promotes the activation of adenylate cyclase, leading to increased intracellular cAMP levels. This is Corticotropin-releasing factor receptor 2 (Crhr2) from Rattus norvegicus (Rat).